The chain runs to 217 residues: External core antigen (217 aa).

Residues 1–20 form the signal peptide; sequence MYLFHLCLVFACVPCPTVQA. The HBEAG stretch occupies residues 26–28; that stretch reads GWL. The tract at residues 166–217 is disordered; sequence APILSTLPEHTVIRRRGGSRAARSPRRRTPSPRRRRSQSPRRRRSQSPASNC. Residues 178-210 show a composition bias toward basic residues; that stretch reads IRRRGGSRAARSPRRRTPSPRRRRSQSPRRRRS. One copy of the 1; half-length repeat lies at 189–195; sequence SPRRRTP. Positions 189 to 211 are 3 X 8 AA repeats of S-P-R-R-R-R-S-Q; sequence SPRRRTPSPRRRRSQSPRRRRSQ. The propeptide occupies 189–217; that stretch reads SPRRRTPSPRRRRSQSPRRRRSQSPASNC. 2 consecutive repeat copies span residues 196-203 and 204-211.

It belongs to the orthohepadnavirus precore antigen family. In terms of assembly, homodimerizes. Phosphorylated. Post-translationally, cleaved by host furin.

The protein resides in the secreted. It localises to the host nucleus. Its function is as follows. May regulate immune response to the intracellular capsid in acting as a T-cell tolerogen, by having an immunoregulatory effect which prevents destruction of infected cells by cytotoxic T-cells. This immune regulation may predispose to chronicity during perinatal infections and prevent severe liver injury during adult infections. This Otospermophilus beecheyi (California ground squirrel) protein is External core antigen.